Here is a 374-residue protein sequence, read N- to C-terminus: S-adenosylmethionine synthase 2 (374 aa).

Glutamate 11 provides a ligand contact to Mg(2+). Residue histidine 17 participates in ATP binding. K(+) is bound at residue glutamate 45. L-methionine-binding residues include glutamate 58 and glutamine 101. ATP contacts are provided by residues 169-171 (DGK), 237-240 (SGRF), aspartate 248, 254-255 (RK), alanine 271, lysine 275, and lysine 279. Aspartate 248 is an L-methionine binding site. Lysine 279 is a binding site for L-methionine.

The protein belongs to the AdoMet synthase family. In terms of assembly, homotetramer. It depends on Mn(2+) as a cofactor. Mg(2+) serves as cofactor. The cofactor is Co(2+). Requires K(+) as cofactor. Expressed in vegetative and reproductive tissues.

The protein resides in the cytoplasm. The enzyme catalyses L-methionine + ATP + H2O = S-adenosyl-L-methionine + phosphate + diphosphate. Its pathway is amino-acid biosynthesis; S-adenosyl-L-methionine biosynthesis; S-adenosyl-L-methionine from L-methionine: step 1/1. Its function is as follows. Catalyzes the formation of S-adenosylmethionine from methionine and ATP. The reaction comprises two steps that are both catalyzed by the same enzyme: formation of S-adenosylmethionine (AdoMet) and triphosphate, and subsequent hydrolysis of the triphosphate. The polypeptide is S-adenosylmethionine synthase 2 (SAMS2) (Pisum sativum (Garden pea)).